Consider the following 208-residue polypeptide: Small ribosomal subunit protein uS4 (208 aa).

The 61-residue stretch at 98 to 158 (RRLDNVVYRL…EKSRGQLRIK (61 aa)) folds into the S4 RNA-binding domain.

Belongs to the universal ribosomal protein uS4 family. Part of the 30S ribosomal subunit. Contacts protein S5. The interaction surface between S4 and S5 is involved in control of translational fidelity.

In terms of biological role, one of the primary rRNA binding proteins, it binds directly to 16S rRNA where it nucleates assembly of the body of the 30S subunit. With S5 and S12 plays an important role in translational accuracy. The chain is Small ribosomal subunit protein uS4 from Magnetococcus marinus (strain ATCC BAA-1437 / JCM 17883 / MC-1).